The sequence spans 412 residues: 1-deoxy-D-xylulose 5-phosphate reductoisomerase (412 aa).

NADPH is bound by residues Thr-5, Gly-6, Ser-7, Ile-8, Gly-31, Asn-33, and Asn-125. Residue Lys-126 coordinates 1-deoxy-D-xylulose 5-phosphate. Glu-127 contacts NADPH. Mn(2+) is bound at residue Asp-151. 1-deoxy-D-xylulose 5-phosphate contacts are provided by Ser-152, Glu-153, Ser-189, and His-212. Residue Glu-153 coordinates Mn(2+). NADPH is bound at residue Gly-218. Residues Ser-225, Asn-230, Lys-231, and Glu-234 each coordinate 1-deoxy-D-xylulose 5-phosphate. Mn(2+) is bound at residue Glu-234.

It belongs to the DXR family. Mg(2+) is required as a cofactor. It depends on Mn(2+) as a cofactor.

It catalyses the reaction 2-C-methyl-D-erythritol 4-phosphate + NADP(+) = 1-deoxy-D-xylulose 5-phosphate + NADPH + H(+). It participates in isoprenoid biosynthesis; isopentenyl diphosphate biosynthesis via DXP pathway; isopentenyl diphosphate from 1-deoxy-D-xylulose 5-phosphate: step 1/6. Catalyzes the NADPH-dependent rearrangement and reduction of 1-deoxy-D-xylulose-5-phosphate (DXP) to 2-C-methyl-D-erythritol 4-phosphate (MEP). The polypeptide is 1-deoxy-D-xylulose 5-phosphate reductoisomerase (Prochlorococcus marinus (strain MIT 9313)).